Reading from the N-terminus, the 302-residue chain is Oxygen-dependent coproporphyrinogen-III oxidase (302 aa).

Substrate is bound at residue Ser-94. Positions 98 and 108 each coordinate a divalent metal cation. His-108 acts as the Proton donor in catalysis. Residue 110 to 112 (NVR) coordinates substrate. A divalent metal cation contacts are provided by His-147 and His-177. Residues 242-277 (YVEFNLVYDRGTLFGLQTGGRTESILMSMPPLARWE) form an important for dimerization region. 260-262 (GGR) contacts substrate.

The protein belongs to the aerobic coproporphyrinogen-III oxidase family. In terms of assembly, homodimer. A divalent metal cation serves as cofactor.

It is found in the cytoplasm. It catalyses the reaction coproporphyrinogen III + O2 + 2 H(+) = protoporphyrinogen IX + 2 CO2 + 2 H2O. It functions in the pathway porphyrin-containing compound metabolism; protoporphyrin-IX biosynthesis; protoporphyrinogen-IX from coproporphyrinogen-III (O2 route): step 1/1. Involved in the heme biosynthesis. Catalyzes the aerobic oxidative decarboxylation of propionate groups of rings A and B of coproporphyrinogen-III to yield the vinyl groups in protoporphyrinogen-IX. This Aeromonas salmonicida (strain A449) protein is Oxygen-dependent coproporphyrinogen-III oxidase.